Consider the following 102-residue polypeptide: UPF0147 protein MTH_1407 (102 aa).

The protein belongs to the UPF0147 family.

The chain is UPF0147 protein MTH_1407 from Methanothermobacter thermautotrophicus (strain ATCC 29096 / DSM 1053 / JCM 10044 / NBRC 100330 / Delta H) (Methanobacterium thermoautotrophicum).